The chain runs to 158 residues: Acetolactate synthase small subunit (158 aa).

In terms of domain architecture, ACT spans 4 to 79; it reads MIIAKLHNVT…DVIEVADITD (76 aa).

It belongs to the acetolactate synthase small subunit family. As to quaternary structure, dimer of large and small chains.

The enzyme catalyses 2 pyruvate + H(+) = (2S)-2-acetolactate + CO2. Its pathway is amino-acid biosynthesis; L-isoleucine biosynthesis; L-isoleucine from 2-oxobutanoate: step 1/4. The protein operates within amino-acid biosynthesis; L-valine biosynthesis; L-valine from pyruvate: step 1/4. The chain is Acetolactate synthase small subunit (ilvH) from Lactococcus lactis subsp. lactis (strain IL1403) (Streptococcus lactis).